Reading from the N-terminus, the 262-residue chain is DNA repair protein RecO (262 aa).

Belongs to the RecO family.

Functionally, involved in DNA repair and RecF pathway recombination. This chain is DNA repair protein RecO, found in Enterococcus faecalis (strain ATCC 700802 / V583).